The chain runs to 435 residues: uncharacterized protein (435 aa).

S47 carries the post-translational modification Phosphoserine. 2 disordered regions span residues 174-210 (LKKK…DDED) and 290-372 (KAEA…EDNK). Acidic residues predominate over residues 195–210 (NEEDEEDEEDEEDDED). Over residues 290-304 (KAEATGEAHSKDVSA) the composition is skewed to basic and acidic residues. Residues 308–318 (SANTTTSFDET) are compositionally biased toward polar residues. Composition is skewed to basic and acidic residues over residues 322–340 (EDEK…KEAN) and 347–361 (VADR…KVND).

The protein localises to the cytoplasm. This is an uncharacterized protein from Saccharomyces cerevisiae (strain ATCC 204508 / S288c) (Baker's yeast).